A 278-amino-acid polypeptide reads, in one-letter code: Probable endonuclease 4 (278 aa).

Zn(2+) is bound by residues H70, H108, E143, D176, H179, H210, D223, H225, and E255.

The protein belongs to the AP endonuclease 2 family. Requires Zn(2+) as cofactor.

It catalyses the reaction Endonucleolytic cleavage to 5'-phosphooligonucleotide end-products.. Its function is as follows. Endonuclease IV plays a role in DNA repair. It cleaves phosphodiester bonds at apurinic or apyrimidinic (AP) sites, generating a 3'-hydroxyl group and a 5'-terminal sugar phosphate. The polypeptide is Probable endonuclease 4 (Mycoplasmopsis agalactiae (strain NCTC 10123 / CIP 59.7 / PG2) (Mycoplasma agalactiae)).